A 367-amino-acid chain; its full sequence is Phosphoribosylaminoimidazole-succinocarboxamide synthase (367 aa).

This sequence belongs to the SAICAR synthetase family.

The enzyme catalyses 5-amino-1-(5-phospho-D-ribosyl)imidazole-4-carboxylate + L-aspartate + ATP = (2S)-2-[5-amino-1-(5-phospho-beta-D-ribosyl)imidazole-4-carboxamido]succinate + ADP + phosphate + 2 H(+). The protein operates within purine metabolism; IMP biosynthesis via de novo pathway; 5-amino-1-(5-phospho-D-ribosyl)imidazole-4-carboxamide from 5-amino-1-(5-phospho-D-ribosyl)imidazole-4-carboxylate: step 1/2. The polypeptide is Phosphoribosylaminoimidazole-succinocarboxamide synthase (Shewanella amazonensis (strain ATCC BAA-1098 / SB2B)).